A 377-amino-acid polypeptide reads, in one-letter code: Gastricsin (377 aa).

An N-terminal signal peptide occupies residues 1–5 (QLLEA). Propeptides (activation peptide) lie at residues 6 to 31 (AVVK…LGEF) and 32 to 48 (LRTH…FGDL). The 313-residue stretch at 62–374 (YFGEISIGTP…DLSNNRVGFA (313 aa)) folds into the Peptidase A1 domain. The active site involves aspartate 80. Intrachain disulfides connect cysteine 93–cysteine 98 and cysteine 256–cysteine 260. The active site involves aspartate 265. A disulfide bridge connects residues cysteine 299 and cysteine 332.

This sequence belongs to the peptidase A1 family. In terms of processing, each pepsinogen is converted to corresponding pepsin at pH 2.0 in part as a result of the release of a 47 AA activation segment and in part as a result of stepwise proteolytic cleavage via an intermediate form(s).

It localises to the secreted. The catalysed reaction is More restricted specificity than pepsin A, but shows preferential cleavage at Tyr-|-Xaa bonds. High activity on hemoglobin.. Its function is as follows. Hydrolyzes a variety of proteins. The sequence is that of Gastricsin (PGC) from Macaca fuscata fuscata (Japanese macaque).